Reading from the N-terminus, the 376-residue chain is Cytochrome b (376 aa).

Helical transmembrane passes span 28–48 (YGFL…FLAS), 72–94 (WCFR…LHIL), 107–127 (SWIS…IGYV), and 169–189 (FFVL…IHIF). The heme b site is built by His78 and His92. The heme b site is built by His173 and His187. Position 192 (His192) interacts with a ubiquinone. Helical transmembrane passes span 214-234 (LLSL…IQSI), 274-294 (IPSK…LFLL), 317-337 (VPII…CQLP), and 340-360 (IFIL…LFAL).

It belongs to the cytochrome b family. In terms of assembly, the main subunits of complex b-c1 are: cytochrome b, cytochrome c1 and the Rieske protein. Heme b serves as cofactor.

Its subcellular location is the mitochondrion inner membrane. In terms of biological role, component of the ubiquinol-cytochrome c reductase complex (complex III or cytochrome b-c1 complex) that is part of the mitochondrial respiratory chain. The b-c1 complex mediates electron transfer from ubiquinol to cytochrome c. Contributes to the generation of a proton gradient across the mitochondrial membrane that is then used for ATP synthesis. This is Cytochrome b (MT-CYB) from Plasmodium chabaudi.